Here is a 381-residue protein sequence, read N- to C-terminus: V-type proton ATPase subunit C 1-B (381 aa).

T2 is subject to N-acetylthreonine.

The protein belongs to the V-ATPase C subunit family. V-ATPase is a heteromultimeric enzyme made up of two complexes: the ATP-hydrolytic V1 complex and the proton translocation V0 complex. The V1 complex consists of three catalytic AB heterodimers that form a heterohexamer, three peripheral stalks each consisting of EG heterodimers, one central rotor including subunits D and F, and the regulatory subunits C and H. The proton translocation complex V0 consists of the proton transport subunit a, a ring of proteolipid subunits c9c'', rotary subunit d, subunits e and f, and two accessory subunits.

In terms of biological role, subunit of the V1 complex of vacuolar(H+)-ATPase (V-ATPase), a multisubunit enzyme composed of a peripheral complex (V1) that hydrolyzes ATP and a membrane integral complex (V0) that translocates protons. V-ATPase is responsible for acidifying and maintaining the pH of intracellular compartments and in some cell types, is targeted to the plasma membrane, where it is responsible for acidifying the extracellular environment. Subunit C is necessary for the assembly of the catalytic sector of the enzyme and is likely to have a specific function in its catalytic activity. The polypeptide is V-type proton ATPase subunit C 1-B (atp6v1c1b) (Danio rerio (Zebrafish)).